The following is a 1203-amino-acid chain: Nitric oxide synthase 3 (1203 aa).

Residues 1-71 form a disordered region; it reads MGNLKSVAQE…PPEGPKFPRV (71 aa). A lipid anchor (N-myristoyl glycine) is attached at G2. Residues C15 and C26 are each lipidated (S-palmitoyl cysteine). A compositionally biased stretch (gly residues) spans 15–27; the sequence is CGLGLGLGLGLCG. A Phosphothreonine modification is found at T33. Pro residues predominate over residues 33 to 66; that stretch reads TPAPEPSRAPASLLPPAPEHSPPSSPLTQPPEGP. The Zn(2+) site is built by C94 and C99. Residues 98-486 are interaction with NOSIP; it reads RCLGSLVFPR…PDPWKGSAAK (389 aa). Residue S102 coordinates (6R)-L-erythro-5,6,7,8-tetrahydrobiopterin. A Phosphoserine; by CDK5 modification is found at S114. C184 lines the heme b pocket. Positions 247, 356, 357, and 361 each coordinate L-arginine. R365 is a (6R)-L-erythro-5,6,7,8-tetrahydrobiopterin binding site. N366 lines the L-arginine pocket. Residues A446, W447, and F460 each coordinate (6R)-L-erythro-5,6,7,8-tetrahydrobiopterin. Position 475 (Y475) interacts with heme b. The segment at 491 to 510 is calmodulin-binding; that stretch reads TRKKTFKEVANAVKISASLM. Residue T495 is modified to Phosphothreonine; by AMPK. Residues 520–703 form the Flavodoxin-like domain; it reads ATILYGSETG…AFRGWAQAAF (184 aa). Residues S526, E527, T528, R530, S572, and T573 each coordinate FMN. 3 positions are modified to phosphoserine: S615, S633, and S638. FMN contacts are provided by S654, C661, E687, and Q691. The 247-residue stretch at 756-1002 folds into the FAD-binding FR-type domain; sequence RKMFQATIRS…IRGAPSFRLP (247 aa). R776 contacts NADP(+). H798 serves as a coordination point for FAD. A Phosphoserine modification is found at S836. 9 residues coordinate FAD: R938, Y940, S941, T956, A958, Y962, V975, C976, and S977. The NADP(+) site is built by T1016, R1049, S1078, R1079, K1085, Y1087, and Q1089. The residue at position 1175 (T1175) is a Phosphothreonine. S1177 carries the phosphoserine; by AMPK modification. S1179 carries the phosphoserine modification.

Belongs to the NOS family. In terms of assembly, homodimer. Interacts with NOSIP and NOSTRIN. Interacts with HSP90AB1. Forms a complex with ASL, ASS1 and SLC7A1; the complex regulates cell-autonomous L-arginine synthesis and citrulline recycling while channeling extracellular L-arginine to nitric oxide synthesis pathway. Requires heme b as cofactor. FAD is required as a cofactor. It depends on FMN as a cofactor. (6R)-L-erythro-5,6,7,8-tetrahydrobiopterin serves as cofactor. Post-translationally, phosphorylation by AMPK at Ser-1177 in the presence of Ca(2+)-calmodulin (CaM) activates activity. In absence of Ca(2+)-calmodulin, AMPK also phosphorylates Thr-495, resulting in inhibition of activity. Phosphorylation of Ser-114 by CDK5 reduces activity. In terms of tissue distribution, platelets, placenta, liver and kidney.

It is found in the cell membrane. Its subcellular location is the membrane. The protein localises to the caveola. The protein resides in the cytoplasm. It localises to the cytoskeleton. It is found in the golgi apparatus. It carries out the reaction 2 L-arginine + 3 NADPH + 4 O2 + H(+) = 2 L-citrulline + 2 nitric oxide + 3 NADP(+) + 4 H2O. Stimulated by calcium/calmodulin. Inhibited by NOSIP and NOSTRIN. Functionally, produces nitric oxide (NO) which is implicated in vascular smooth muscle relaxation through a cGMP-mediated signal transduction pathway. NO mediates vascular endothelial growth factor (VEGF)-induced angiogenesis in coronary vessels and promotes blood clotting through the activation of platelets. Lacks eNOS activity, dominant-negative form that may down-regulate eNOS activity by forming heterodimers with isoform 1. This Homo sapiens (Human) protein is Nitric oxide synthase 3.